The sequence spans 889 residues: F-BAR domain only protein 1 (889 aa).

The F-BAR domain maps to 1–248 (MSYFGEHFWG…NIENVSVEML (248 aa)). Residues 1–275 (MSYFGEHFWG…LDFEAYSAAA (275 aa)) are mediates membrane-binding. Residues 156 to 195 (TSQKEMDKAETKTKKAAESLRRSVEKYNSARADFEQKMLD) adopt a coiled-coil conformation. A mediates interaction with the adaptor protein complex AP-2 region spans residues 267 to 442 (DFEAYSAAAL…KNLFGPPLES (176 aa)). The segment at 294 to 352 (LSRREREPEPPAAVDFLEPDSGTCPEVDEEGFTVRPDVTQNSTAEPSRFSSSDSDFDDE) is disordered. 3 positions are modified to phosphoserine: Ser295, Ser347, and Ser372. The disordered stretch occupies residues 382-596 (ATAGSLILPP…SPLGSSAAST (215 aa)). Positions 450–469 (TGSSSLGFTSSPSPFSSSSP) are enriched in low complexity. Pro residues predominate over residues 496–511 (PGTPQSPPSCRAPPPE). Ser530 bears the Phosphoserine mark. The span at 580–596 (LSRSLSPSPLGSSAAST) shows a compositional bias: low complexity. Positions 609–889 (HGVSRGPSPV…FATGMYLVSC (281 aa)) are mediates interaction with AGFG1, CALM, DAB2, EPS15, EPS15R, ITSN1 and clathrin. The residue at position 616 (Ser616) is a Phosphoserine. Residues 625–888 (ALPIATAFTE…RFATGMYLVS (264 aa)) enclose the MHD domain. The tract at residues 826–849 (AGGSGRLSASWEPLSGPSTPSPVA) is disordered.

The protein belongs to the FCHO family. In terms of assembly, may oligomerize and form homotetramer. Interacts with AP2A2 and AP2B1; 2 subunits of the adaptor protein complex AP-2. Interacts with DAB2. Interacts with clathrin (CLTC or CLTCL1). Interacts with EPS15, EPS15R and ITSN1. Interacts with AGFG1 and CALM. May interact with ACVR1; linking this receptor to clathrin-mediated endocytosis. Predominantly expressed in lymphoid cells.

The protein resides in the membrane. Its subcellular location is the clathrin-coated pit. In terms of biological role, functions in an early step of clathrin-mediated endocytosis. Has both a membrane binding/bending activity and the ability to recruit proteins essential to the formation of functional clathrin-coated pits. May regulate Bmp signaling by regulating clathrin-mediated endocytosis of Bmp receptors. Involved in the regulation of T-cell poliferation and activation. Affects TCR clustering upon receptor triggering and modulates its internalisation, playing a role in TCR-dependent T-cell activation. This chain is F-BAR domain only protein 1, found in Homo sapiens (Human).